The sequence spans 261 residues: Kallikrein 1-related peptidase b11 (261 aa).

An N-terminal signal peptide occupies residues Met-1 to Ala-18. Positions Pro-19–Arg-24 are cleaved as a propeptide — activation peptide. Residues Ile-25–Ala-258 enclose the Peptidase S1 domain. 5 disulfide bridges follow: Cys-31/Cys-173, Cys-50/Cys-66, Cys-152/Cys-219, Cys-184/Cys-198, and Cys-209/Cys-234. His-65 functions as the Charge relay system in the catalytic mechanism. Asn-102 is a glycosylation site (N-linked (GlcNAc...) asparagine). The active-site Charge relay system is Asp-120. Ser-213 (charge relay system) is an active-site residue.

This sequence belongs to the peptidase S1 family. Kallikrein subfamily.

The catalysed reaction is Preferential cleavage of Arg-|-Xaa bonds in small molecule substrates. Highly selective action to release kallidin (lysyl-bradykinin) from kininogen involves hydrolysis of Met-|-Xaa or Leu-|-Xaa.. Its function is as follows. Glandular kallikreins cleave Met-Lys and Arg-Ser bonds in kininogen to release Lys-bradykinin. This chain is Kallikrein 1-related peptidase b11 (Klk1b11), found in Mus musculus (Mouse).